A 603-amino-acid polypeptide reads, in one-letter code: Geraniol synthase Tps-5073G30, chloroplastic (603 aa).

A chloroplast-targeting transit peptide spans 1–35 (MCSISQKVVIGLNKAAANNNLQNLDRRGFKTRCVS). (2E)-geranyl diphosphate is bound by residues Arg-319, Asp-356, Asp-360, Arg-497, and Asp-500. 2 residues coordinate Mg(2+): Asp-356 and Asp-360. Residues 356–360 (DDVYD) carry the DDXXD motif motif. Residues Asp-500, Thr-504, and Glu-508 each contribute to the Mg(2+) site.

This sequence belongs to the terpene synthase family. Tpsb subfamily. In terms of assembly, monomer. It depends on Mg(2+) as a cofactor. Mn(2+) is required as a cofactor.

The protein resides in the plastid. It localises to the chloroplast. It catalyses the reaction (2E)-geranyl diphosphate + H2O = (2E)-geraniol + diphosphate. It participates in secondary metabolite biosynthesis; terpenoid biosynthesis. Functionally, monoterpene synthase (mono-TPS) involved in the biosynthesis of monoterpenes natural products. Catalyzes the conversion of (2E)-geranyl diphosphate (GPP) into geraniol. In Perilla frutescens (Beefsteak mint), this protein is Geraniol synthase Tps-5073G30, chloroplastic.